Here is a 260-residue protein sequence, read N- to C-terminus: MIIVLSPAKSLDYDTPAHVPSYTQPAFVDDASELIDGLRKLSPQDIATLMDISDPLARLNFQRYADWSPTFTPANAKQAVLAFNGDVYEGFDAKSLSAADLDYAQQHVRVLSGLYGLLRPLDLLQPYRLEMGTRFASARGKDLYAFWGDRITRALNEQLETRSGAARVLINCASTEYFKSVKPKLLAAPVVTPVFEDWKGGRYKIISFHAKRARGLMARYIVENRIAEPAALKDFALEGYAFDAAASNDSTYVYRRRIGE.

The protein belongs to the UPF0246 family.

The protein is UPF0246 protein Bcep1808_2308 of Burkholderia vietnamiensis (strain G4 / LMG 22486) (Burkholderia cepacia (strain R1808)).